Consider the following 140-residue polypeptide: T cell receptor alpha chain constant (140 aa).

Positions 19–107 (KSVCLFTDFD…LVEKSFETDT (89 aa)) constitute an Ig-like C1-type domain. A disulfide bridge connects residues Cys22 and Cys72. Asn32, Asn66, Asn77, and Asn113 each carry an N-linked (GlcNAc...) asparagine glycan. Positions 94-115 (CDVKLVEKSFETDTNLNFQNLS) are connecting peptide. Residues 116-138 (VIGFRILLLKVAGFNLLMTLRLW) traverse the membrane as a helical segment. The Cytoplasmic portion of the chain corresponds to 139 to 140 (SS).

In terms of assembly, alpha-beta TR is a heterodimer composed of an alpha and beta chain; disulfide-linked. The alpha-beta TR is associated with the transmembrane signaling CD3 coreceptor proteins to form the TR-CD3 (TcR or TCR). The assembly of alpha-beta TR heterodimers with CD3 occurs in the endoplasmic reticulum where a single alpha-beta TR heterodimer associates with one CD3D-CD3E heterodimer, one CD3G-CD3E heterodimer and one CD247 homodimer forming a stable octameric structure. CD3D-CD3E and CD3G-CD3E heterodimers preferentially associate with TR alpha and TR beta chains, respectively. The association of the CD247 homodimer is the last step of TcR assembly in the endoplasmic reticulum and is required for transport to the cell surface.

It localises to the cell membrane. Constant region of T cell receptor (TR) alpha chain. Alpha-beta T cell receptors are antigen specific receptors which are essential to the immune response and are present on the cell surface of T lymphocytes. Recognize peptide-major histocompatibility (MH) (pMH) complexes that are displayed by antigen presenting cells (APC), a prerequisite for efficient T cell adaptive immunity against pathogens. Binding of alpha-beta TR to pMH complex initiates TR-CD3 clustering on the cell surface and intracellular activation of LCK that phosphorylates the ITAM motifs of CD3G, CD3D, CD3E and CD247 enabling the recruitment of ZAP70. In turn, ZAP70 phosphorylates LAT, which recruits numerous signaling molecules to form the LAT signalosome. The LAT signalosome propagates signal branching to three major signaling pathways, the calcium, the mitogen-activated protein kinase (MAPK) kinase and the nuclear factor NF-kappa-B (NF-kB) pathways, leading to the mobilization of transcription factors that are critical for gene expression and essential for T cell growth and differentiation. The T cell repertoire is generated in the thymus, by V-(D)-J rearrangement. This repertoire is then shaped by intrathymic selection events to generate a peripheral T cell pool of self-MH restricted, non-autoaggressive T cells. Post-thymic interaction of alpha-beta TR with the pMH complexes shapes TR structural and functional avidity. This chain is T cell receptor alpha chain constant, found in Homo sapiens (Human).